Reading from the N-terminus, the 266-residue chain is Putative carbamate hydrolase RutD (266 aa).

This sequence belongs to the AB hydrolase superfamily. Hydrolase RutD family.

The enzyme catalyses carbamate + 2 H(+) = NH4(+) + CO2. Its function is as follows. Involved in pyrimidine catabolism. May facilitate the hydrolysis of carbamate, a reaction that can also occur spontaneously. The protein is Putative carbamate hydrolase RutD of Escherichia coli (strain B / BL21-DE3).